Consider the following 534-residue polypeptide: Cytochrome c oxidase subunit 1 (534 aa).

The helical transmembrane segment at 16–36 (VLYFIFAIFCGMAGTAMSLII) threads the bilayer. Ca(2+) is bound by residues Glu-39, Ala-42, and Gly-44. 6 consecutive transmembrane segments (helical) span residues 57–77 (VLVV…ALIG), 101–121 (ISFW…LVES), 147–167 (AIFA…NFIV), 182–202 (LPLF…SLPV), 235–255 (LFWF…FGII), and 267–287 (VFGE…GFLV). His-62 contributes to the Fe(II)-heme a binding site. His-241 is a Cu cation binding site. The segment at residues 241 to 245 (HPEVY) is a cross-link (1'-histidyl-3'-tyrosine (His-Tyr)). Tyr-245 contributes to the O2 binding site. 2 residues coordinate Cu cation: His-290 and His-291. 2 helical membrane-spanning segments follow: residues 310-330 (MIIA…IYGG) and 338-358 (MLYA…GVAL). The Mg(2+) site is built by His-368 and Asp-369. 2 helical membrane-spanning segments follow: residues 372-392 (YVVG…LFAG) and 412-432 (IQFW…HFLG). Residue His-376 coordinates heme a3. His-378 serves as a coordination point for Fe(II)-heme a. Pro-441 contributes to the Ca(2+) binding site. The chain crosses the membrane as a helical span at residues 452 to 472 (YVASIGSIIAVFSLFLFIYIL).

This sequence belongs to the heme-copper respiratory oxidase family. As to quaternary structure, component of the cytochrome c oxidase (complex IV, CIV), a multisubunit enzyme composed of a catalytic core of 3 subunits and several supernumerary subunits. The complex exists as a monomer or a dimer and forms supercomplexes (SCs) in the inner mitochondrial membrane with ubiquinol-cytochrome c oxidoreductase (cytochrome b-c1 complex, complex III, CIII). Heme is required as a cofactor. Requires Cu cation as cofactor.

The protein resides in the mitochondrion inner membrane. The catalysed reaction is 4 Fe(II)-[cytochrome c] + O2 + 8 H(+)(in) = 4 Fe(III)-[cytochrome c] + 2 H2O + 4 H(+)(out). It functions in the pathway energy metabolism; oxidative phosphorylation. Functionally, component of the cytochrome c oxidase, the last enzyme in the mitochondrial electron transport chain which drives oxidative phosphorylation. The respiratory chain contains 3 multisubunit complexes succinate dehydrogenase (complex II, CII), ubiquinol-cytochrome c oxidoreductase (cytochrome b-c1 complex, complex III, CIII) and cytochrome c oxidase (complex IV, CIV), that cooperate to transfer electrons derived from NADH and succinate to molecular oxygen, creating an electrochemical gradient over the inner membrane that drives transmembrane transport and the ATP synthase. Cytochrome c oxidase is the component of the respiratory chain that catalyzes the reduction of oxygen to water. Electrons originating from reduced cytochrome c in the intermembrane space (IMS) are transferred via the dinuclear copper A center (CU(A)) of subunit 2 and heme A of subunit 1 to the active site in subunit 1, a binuclear center (BNC) formed by heme A3 and copper B (CU(B)). The BNC reduces molecular oxygen to 2 water molecules using 4 electrons from cytochrome c in the IMS and 4 protons from the mitochondrial matrix. In Kluyveromyces lactis (strain ATCC 8585 / CBS 2359 / DSM 70799 / NBRC 1267 / NRRL Y-1140 / WM37) (Yeast), this protein is Cytochrome c oxidase subunit 1 (COX1).